A 324-amino-acid polypeptide reads, in one-letter code: ATP synthase subunit a 2 (324 aa).

Residues 1-33 (MKRVNVFRSGVFSRLFALLLPFLLGINGLVYAS) form the signal peptide. Transmembrane regions (helical) follow at residues 95–115 (HVVMMWIASAILLVVFLLVGN), 157–177 (LPYLLTVFAFILLLNLLGLVP), 179–199 (GATATGNINVTLTLAVFTFFI), 224–244 (ALWIIMIPIEIIGLFTKPFAL), 257–277 (IVILSLIFISFILKSYIVAMF), and 291–311 (IFVAFLQAFIFTMLSALFIGL).

It belongs to the ATPase A chain family. As to quaternary structure, F-type ATPases have 2 components, CF(1) - the catalytic core - and CF(0) - the membrane proton channel. CF(1) has five subunits: alpha(3), beta(3), gamma(1), delta(1), epsilon(1). CF(0) has four main subunits: a, b, b' and c.

The protein resides in the cell inner membrane. In terms of biological role, key component of the proton channel; it plays a direct role in the translocation of protons across the membrane. In Prosthecochloris aestuarii (strain DSM 271 / SK 413), this protein is ATP synthase subunit a 2.